The sequence spans 421 residues: Alpha-1-antitrypsin (421 aa).

An N-terminal signal peptide occupies residues 1–24 (MASSSTWGLLLLAGLCCLVPISLA). Residues Asn73 and Asn110 are each glycosylated (N-linked (GlcNAc...) asparagine). The segment at 376 to 395 (GATILEAIPMSIPPNVKFNK) is RCL. The residue at position 386 (Ser386) is a Phosphoserine.

Belongs to the serpin family. In terms of assembly, interacts with CELA2A. Interacts with ERGIC3 and LMAN1/ERGIC53. Interacts with PRSS1/Trypsin.

It is found in the secreted. Functionally, inhibitor of serine proteases. Its primary target is elastase, but it also has a moderate affinity for plasmin and thrombin. This chain is Alpha-1-antitrypsin (SERPINA1), found in Sus scrofa (Pig).